A 735-amino-acid chain; its full sequence is NAD(P)H-quinone oxidoreductase subunit 5, chloroplastic (735 aa).

The next 16 membrane-spanning stretches (helical) occupy residues 9–29 (WIIP…LLLF), 40–60 (WAFP…DLSI), 89–109 (IDSL…FVLI), 125–145 (FAYM…CNLI), 147–167 (IYIF…FWFT), 184–204 (IGDF…GSFE), 219–239 (NEVH…GAVA), 258–278 (TPIS…FLVA), 280–300 (LLPL…IGII), 327–347 (LGYM…FHLI), 354–374 (ALLF…VGYS), 396–416 (IAFL…CFWS), 425–445 (WLYS…TAFY), 540–560 (LFPM…AIPF), 600–620 (FSVS…KPFY), and 714–734 (FYLL…YFIL).

This sequence belongs to the complex I subunit 5 family. In terms of assembly, NDH is composed of at least 16 different subunits, 5 of which are encoded in the nucleus.

It localises to the plastid. The protein resides in the chloroplast thylakoid membrane. It catalyses the reaction a plastoquinone + NADH + (n+1) H(+)(in) = a plastoquinol + NAD(+) + n H(+)(out). The catalysed reaction is a plastoquinone + NADPH + (n+1) H(+)(in) = a plastoquinol + NADP(+) + n H(+)(out). Its function is as follows. NDH shuttles electrons from NAD(P)H:plastoquinone, via FMN and iron-sulfur (Fe-S) centers, to quinones in the photosynthetic chain and possibly in a chloroplast respiratory chain. The immediate electron acceptor for the enzyme in this species is believed to be plastoquinone. Couples the redox reaction to proton translocation, and thus conserves the redox energy in a proton gradient. In Gossypium hirsutum (Upland cotton), this protein is NAD(P)H-quinone oxidoreductase subunit 5, chloroplastic (ndhF).